Here is a 166-residue protein sequence, read N- to C-terminus: NAD(P)H-quinone oxidoreductase subunit I, chloroplastic (166 aa).

4Fe-4S ferredoxin-type domains follow at residues 55-84 and 95-124; these read GRIH…VDWK and LNYS…MTEE. [4Fe-4S] cluster-binding residues include C64, C67, C70, C74, C104, C107, C110, and C114.

This sequence belongs to the complex I 23 kDa subunit family. NDH is composed of at least 16 different subunits, 5 of which are encoded in the nucleus. Requires [4Fe-4S] cluster as cofactor.

The protein resides in the plastid. The protein localises to the chloroplast thylakoid membrane. The enzyme catalyses a plastoquinone + NADH + (n+1) H(+)(in) = a plastoquinol + NAD(+) + n H(+)(out). It carries out the reaction a plastoquinone + NADPH + (n+1) H(+)(in) = a plastoquinol + NADP(+) + n H(+)(out). Its function is as follows. NDH shuttles electrons from NAD(P)H:plastoquinone, via FMN and iron-sulfur (Fe-S) centers, to quinones in the photosynthetic chain and possibly in a chloroplast respiratory chain. The immediate electron acceptor for the enzyme in this species is believed to be plastoquinone. Couples the redox reaction to proton translocation, and thus conserves the redox energy in a proton gradient. This Laphamia lindheimeri (Lindheimer's rockdaisy) protein is NAD(P)H-quinone oxidoreductase subunit I, chloroplastic.